Here is a 498-residue protein sequence, read N- to C-terminus: Trehalose-6-phosphate synthase (498 aa).

Arginine 28 serves as a coordination point for D-glucose 6-phosphate. 48–49 (GG) is a binding site for UDP-alpha-D-glucose. Tyrosine 106 and aspartate 160 together coordinate D-glucose 6-phosphate. The UDP-alpha-D-glucose site is built by arginine 302 and lysine 307. Arginine 340 lines the D-glucose 6-phosphate pocket. 405–409 (LVAKE) is a UDP-alpha-D-glucose binding site.

The protein belongs to the glycosyltransferase 20 family. As to quaternary structure, homotetramer.

It catalyses the reaction ADP-alpha-D-glucose + D-glucose 6-phosphate = alpha,alpha-trehalose 6-phosphate + ADP + H(+). It carries out the reaction CDP-alpha-D-glucose + D-glucose 6-phosphate = alpha,alpha-trehalose 6-phosphate + CDP + H(+). The catalysed reaction is GDP-alpha-D-glucose + D-glucose 6-phosphate = alpha,alpha-trehalose 6-phosphate + GDP + H(+). The enzyme catalyses TDP-alpha-D-glucose + D-glucose 6-phosphate = 5-methyl-UDP + alpha,alpha-trehalose 6-phosphate + H(+). It catalyses the reaction D-glucose 6-phosphate + UDP-alpha-D-glucose = alpha,alpha-trehalose 6-phosphate + UDP + H(+). The protein operates within glycan biosynthesis; trehalose biosynthesis. Its function is as follows. Probably involved in the osmoprotection via the biosynthesis of trehalose and in the production of glycogen and alpha-glucan via the TreS-Pep2 branch involved in the biosynthesis of maltose-1-phosphate (M1P). Catalyzes the transfer of glucose from UDP-glucose (UDP-Glc) to D-glucose 6-phosphate (Glc-6-P) to form trehalose-6-phosphate. Probably also able to use ADP-Glc, CDP-Glc, GDP-Glc and TDP-Glc as glucosyl donors. The polypeptide is Trehalose-6-phosphate synthase (Mycobacterium leprae (strain TN)).